We begin with the raw amino-acid sequence, 170 residues long: MGKGELELAGFILSEAFDEKAEKEKVEKEKALKEKTEKEKAEKEKAEKEKVEKEKAEKEKAAKEKAAKEKAEREKSKSAVSPATTNQNSNKGNVEKGVAIGVLAGGAVTGVAVGGAYLADKYIASKAAGAAVNVIELTPIPNAANTANNAAAVSQGSHRWQPLPYYLFNI.

A coiled-coil region spans residues E15–S81. The segment covering K20–K77 has biased composition (basic and acidic residues). The tract at residues K20 to E95 is disordered. Polar residues predominate over residues S78–G92. The helical transmembrane segment at V98–L118 threads the bilayer.

It is found in the membrane. This is an uncharacterized protein from Dictyostelium discoideum (Social amoeba).